The primary structure comprises 140 residues: Peptidyl-prolyl cis-trans isomerase FKBP2 (140 aa).

The first 22 residues, 1–22 (MRLSWILTILSICLSALAAATG), serve as a signal peptide directing secretion. Residues 47-135 (GDVLHMHYTG…VFEVELLKIE (89 aa)) form the PPIase FKBP-type domain. The Prevents secretion from ER signature appears at 137-140 (RSEL).

This sequence belongs to the FKBP-type PPIase family. FKBP2 subfamily. Interacts with ARFGEF1/BIG1 and the C-terminal of EPB41L2.

The protein localises to the endoplasmic reticulum membrane. The catalysed reaction is [protein]-peptidylproline (omega=180) = [protein]-peptidylproline (omega=0). Inhibited by both FK506 and rapamycin. Functionally, PPIases accelerate the folding of proteins. It catalyzes the cis-trans isomerization of proline imidic peptide bonds in oligopeptides. In Mus musculus (Mouse), this protein is Peptidyl-prolyl cis-trans isomerase FKBP2 (Fkbp2).